The primary structure comprises 261 residues: Zinc import ATP-binding protein ZnuC (261 aa).

Residues 6 to 221 form the ABC transporter domain; that stretch reads IRLEKVAVRF…PAFVELFGNN (216 aa). 38-45 serves as a coordination point for ATP; the sequence is GPNGAGKT.

The protein belongs to the ABC transporter superfamily. Zinc importer (TC 3.A.1.15.5) family. The complex is composed of two ATP-binding proteins (ZnuC), two transmembrane proteins (ZnuB) and a solute-binding protein (ZnuA).

The protein resides in the cell inner membrane. The catalysed reaction is Zn(2+)(out) + ATP(in) + H2O(in) = Zn(2+)(in) + ADP(in) + phosphate(in) + H(+)(in). Its function is as follows. Part of the ABC transporter complex ZnuABC involved in zinc import. Responsible for energy coupling to the transport system. In Pseudomonas fluorescens (strain Pf0-1), this protein is Zinc import ATP-binding protein ZnuC.